Reading from the N-terminus, the 303-residue chain is N-acetyl-D-glucosamine kinase (303 aa).

ATP is bound by residues 4-11 (GFDVGGTK) and 133-140 (GFGGGLIY). Zn(2+) is bound by residues histidine 157, cysteine 177, cysteine 179, and cysteine 184.

This sequence belongs to the ROK (NagC/XylR) family. NagK subfamily.

The catalysed reaction is N-acetyl-D-glucosamine + ATP = N-acetyl-D-glucosamine 6-phosphate + ADP + H(+). It participates in cell wall biogenesis; peptidoglycan recycling. Catalyzes the phosphorylation of N-acetyl-D-glucosamine (GlcNAc) derived from cell-wall degradation, yielding GlcNAc-6-P. This chain is N-acetyl-D-glucosamine kinase, found in Vibrio vulnificus (strain CMCP6).